Reading from the N-terminus, the 316-residue chain is tRNA dimethylallyltransferase (316 aa).

Position 13–20 (glycine 13–threonine 20) interacts with ATP. Threonine 15–threonine 20 provides a ligand contact to substrate. Residues aspartate 38–glutamine 41 are interaction with substrate tRNA.

The protein belongs to the IPP transferase family. Monomer. It depends on Mg(2+) as a cofactor.

It catalyses the reaction adenosine(37) in tRNA + dimethylallyl diphosphate = N(6)-dimethylallyladenosine(37) in tRNA + diphosphate. Functionally, catalyzes the transfer of a dimethylallyl group onto the adenine at position 37 in tRNAs that read codons beginning with uridine, leading to the formation of N6-(dimethylallyl)adenosine (i(6)A). The chain is tRNA dimethylallyltransferase from Staphylococcus carnosus (strain TM300).